The sequence spans 89 residues: UPF0213 protein HQ_3675A (89 aa).

The GIY-YIG domain maps to 3-78 (DYHYVYIVEC…KSYTREKKQQ (76 aa)).

Belongs to the UPF0213 family.

The protein is UPF0213 protein HQ_3675A of Haloquadratum walsbyi (strain DSM 16790 / HBSQ001).